The chain runs to 209 residues: Imidazole glycerol phosphate synthase subunit HisH (209 aa).

A Glutamine amidotransferase type-1 domain is found at M1–S205. The active-site Nucleophile is C79. Catalysis depends on residues H180 and E182.

As to quaternary structure, heterodimer of HisH and HisF.

It is found in the cytoplasm. The enzyme catalyses 5-[(5-phospho-1-deoxy-D-ribulos-1-ylimino)methylamino]-1-(5-phospho-beta-D-ribosyl)imidazole-4-carboxamide + L-glutamine = D-erythro-1-(imidazol-4-yl)glycerol 3-phosphate + 5-amino-1-(5-phospho-beta-D-ribosyl)imidazole-4-carboxamide + L-glutamate + H(+). It catalyses the reaction L-glutamine + H2O = L-glutamate + NH4(+). It participates in amino-acid biosynthesis; L-histidine biosynthesis; L-histidine from 5-phospho-alpha-D-ribose 1-diphosphate: step 5/9. In terms of biological role, IGPS catalyzes the conversion of PRFAR and glutamine to IGP, AICAR and glutamate. The HisH subunit catalyzes the hydrolysis of glutamine to glutamate and ammonia as part of the synthesis of IGP and AICAR. The resulting ammonia molecule is channeled to the active site of HisF. In Bacillus cereus (strain ATCC 10987 / NRS 248), this protein is Imidazole glycerol phosphate synthase subunit HisH.